Here is a 202-residue protein sequence, read N- to C-terminus: GPI-anchored hemophore cfmB (202 aa).

A signal peptide spans 1 to 18 (MHFSRTSLILFAAGLASA). Residues 19–108 (QLPNVPGCSL…STTASETATT (90 aa)) form the CFEM domain. Intrachain disulfides connect C26–C67, C30–C62, C40–C48, and C50–C83. Heme is bound at residue D45. The interval 94 to 171 (PVGAASTTAS…PSSQSTSASA (78 aa)) is disordered. Over residues 97-171 (AASTTASETA…PSSQSTSASA (75 aa)) the composition is skewed to low complexity. N180 is lipidated: GPI-anchor amidated asparagine. A propeptide spans 181–202 (AGSEKANVAGVVAVAAAALYLL) (removed in mature form).

This sequence belongs to the RBT5 family. In terms of processing, the GPI-anchor is attached to the protein in the endoplasmic reticulum and serves to target the protein to the cell surface. There, the glucosamine-inositol phospholipid moiety is cleaved off and the GPI-modified mannoprotein is covalently attached via its lipidless GPI glycan remnant to the 1,6-beta-glucan of the outer cell wall layer.

Its subcellular location is the secreted. The protein localises to the cell wall. It is found in the cell membrane. Functionally, GPI-anchored cell wall protein involved in stabilizing the cell wall. Not implicated in virulence, heme uptake and biofilm formation. In Aspergillus fumigatus (strain ATCC MYA-4609 / CBS 101355 / FGSC A1100 / Af293) (Neosartorya fumigata), this protein is GPI-anchored hemophore cfmB.